We begin with the raw amino-acid sequence, 420 residues long: 3-isopropylmalate dehydratase large subunit (420 aa).

[4Fe-4S] cluster contacts are provided by Cys300, Cys361, and Cys364.

Belongs to the aconitase/IPM isomerase family. LeuC type 2 subfamily. In terms of assembly, heterodimer of LeuC and LeuD. It depends on [4Fe-4S] cluster as a cofactor.

The catalysed reaction is (2R,3S)-3-isopropylmalate = (2S)-2-isopropylmalate. The protein operates within amino-acid biosynthesis; L-leucine biosynthesis; L-leucine from 3-methyl-2-oxobutanoate: step 2/4. Functionally, catalyzes the isomerization between 2-isopropylmalate and 3-isopropylmalate, via the formation of 2-isopropylmaleate. The chain is 3-isopropylmalate dehydratase large subunit from Endomicrobium trichonymphae.